The primary structure comprises 320 residues: tRNA N6-adenosine threonylcarbamoyltransferase (320 aa).

Fe cation is bound by residues His-114 and His-118. Residues 136-140 (VVSGG), Asp-169, Gly-182, Asp-186, and Asn-273 each bind substrate. Asp-297 contributes to the Fe cation binding site.

Belongs to the KAE1 / TsaD family. The cofactor is Fe(2+).

It localises to the cytoplasm. It catalyses the reaction L-threonylcarbamoyladenylate + adenosine(37) in tRNA = N(6)-L-threonylcarbamoyladenosine(37) in tRNA + AMP + H(+). In terms of biological role, required for the formation of a threonylcarbamoyl group on adenosine at position 37 (t(6)A37) in tRNAs that read codons beginning with adenine. Is involved in the transfer of the threonylcarbamoyl moiety of threonylcarbamoyl-AMP (TC-AMP) to the N6 group of A37, together with TsaE and TsaB. TsaD likely plays a direct catalytic role in this reaction. This chain is tRNA N6-adenosine threonylcarbamoyltransferase, found in Ureaplasma urealyticum serovar 10 (strain ATCC 33699 / Western).